Here is a 291-residue protein sequence, read N- to C-terminus: Sulfotransferase 1A1 (291 aa).

A 3'-phosphoadenylyl sulfate-binding site is contributed by 44–49 (KSGTTW). 102–104 (KTH) lines the substrate pocket. Catalysis depends on His-104, which acts as the Proton acceptor. 3'-phosphoadenylyl sulfate contacts are provided by residues Arg-126, Ser-134, Tyr-189, 223 to 228 (TSFKKM), and 251 to 255 (FMRKG). Residue Ser-134 is modified to Phosphoserine.

Belongs to the sulfotransferase 1 family. Homodimer. The N-terminus is blocked. As to expression, liver, kidney, heart and colon.

The protein resides in the cytoplasm. The catalysed reaction is a phenol + 3'-phosphoadenylyl sulfate = an aryl sulfate + adenosine 3',5'-bisphosphate + H(+). It carries out the reaction 17beta-estradiol + 3'-phosphoadenylyl sulfate = 17beta-estradiol 3-sulfate + adenosine 3',5'-bisphosphate + H(+). The enzyme catalyses 4-ethylphenol + 3'-phosphoadenylyl sulfate = 4-ethylphenyl sulfate + adenosine 3',5'-bisphosphate + H(+). It catalyses the reaction 4-nitrophenol + 3'-phosphoadenylyl sulfate = 4-nitrophenyl sulfate + adenosine 3',5'-bisphosphate. The catalysed reaction is dopamine + 3'-phosphoadenylyl sulfate = dopamine 3-O-sulfate + adenosine 3',5'-bisphosphate + H(+). It carries out the reaction dopamine + 3'-phosphoadenylyl sulfate = dopamine 4-O-sulfate + adenosine 3',5'-bisphosphate + H(+). The enzyme catalyses 3,3',5-triiodo-L-thyronine + 3'-phosphoadenylyl sulfate = 3,3',5-triiodo-L-thyronine sulfate + adenosine 3',5'-bisphosphate + H(+). It catalyses the reaction 3,3',5'-triiodo-L-thyronine + 3'-phosphoadenylyl sulfate = 3,3',5'-triiodo-L-thyronine sulfate + adenosine 3',5'-bisphosphate + H(+). The catalysed reaction is 3,3'-diiodo-L-thyronine + 3'-phosphoadenylyl sulfate = 3,3'-diiodo-L-thyronine sulfate + adenosine 3',5'-bisphosphate + H(+). It carries out the reaction L-thyroxine + 3'-phosphoadenylyl sulfate = L-thyroxine sulfate + adenosine 3',5'-bisphosphate + H(+). Functionally, sulfotransferase that utilizes 3'-phospho-5'-adenylyl sulfate (PAPS) as sulfonate donor to catalyze the sulfate conjugation of a wide variety of acceptor molecules bearing a hydroxyl or an amine group. Sulfonation increases the water solubility of most compounds, and therefore their renal excretion, but it can also result in bioactivation to form active metabolites. Displays broad substrate specificity for small phenolic compounds. Plays an important roles in the sulfonation of endogenous molecules such as steroid hormones. Mediates the sulfate conjugation of a variety of xenobiotics, including the drugs acetaminophen and minoxidil. Mediates also the metabolic activation of carcinogenic N-hydroxyarylamines leading to highly reactive intermediates capable of forming DNA adducts, potentially resulting in mutagenesis. May play a role in gut microbiota-host metabolic interaction. O-sulfonates 4-ethylphenol (4-EP), a dietary tyrosine-derived metabolite produced by gut bacteria. The product 4-EPS crosses the blood-brain barrier and may negatively regulate oligodendrocyte maturation and myelination, affecting the functional connectivity of different brain regions associated with the limbic system. Catalyzes the sulfate conjugation of dopamine. Catalyzes the sulfation of T4 (L-thyroxine/3,5,3',5'-tetraiodothyronine), T3 (3,5,3'-triiodothyronine), rT3 (3,3',5'-triiodothyronine) and 3,3'-T2 (3,3'-diiodothyronine), with a substrate preference of 3,3'-T2 &gt; rT3 &gt; T3 &gt; T4. This Rattus norvegicus (Rat) protein is Sulfotransferase 1A1 (Sult1a1).